Reading from the N-terminus, the 381-residue chain is Cytochrome b (381 aa).

4 helical membrane passes run 34-54, 78-99, 114-134, and 179-199; these read FGSLLGLCLIMQIITGLFLAM, WLMRNIHAYGASFFFICIYLHI, WNIGVVLLFLLMATAFVGYVL, and FFAFHFLLPFLILALSVIHIL. Residues histidine 84 and histidine 98 each contribute to the heme b site. Residues histidine 183 and histidine 197 each contribute to the heme b site. Histidine 202 is a binding site for a ubiquinone. The next 4 helical transmembrane spans lie at 227 to 247, 289 to 309, 321 to 341, and 348 to 368; these read YKDLFGFLIVITLLATLALFM, LGGVLALLFSIFILLLVPLLH, LTQIFFWSLVTNAIILTWIGG, and FIMVGQIASVAYFSLFLFVIP.

This sequence belongs to the cytochrome b family. The cytochrome bc1 complex contains 3 respiratory subunits (MT-CYB, CYC1 and UQCRFS1), 2 core proteins (UQCRC1 and UQCRC2) and probably 6 low-molecular weight proteins. Requires heme b as cofactor.

The protein resides in the mitochondrion inner membrane. In terms of biological role, component of the ubiquinol-cytochrome c reductase complex (complex III or cytochrome b-c1 complex) that is part of the mitochondrial respiratory chain. The b-c1 complex mediates electron transfer from ubiquinol to cytochrome c. Contributes to the generation of a proton gradient across the mitochondrial membrane that is then used for ATP synthesis. This is Cytochrome b (mt-cyb) from Scyliorhinus canicula (Small-spotted catshark).